The sequence spans 432 residues: Gamma-glutamyl phosphate reductase (432 aa).

It belongs to the gamma-glutamyl phosphate reductase family.

The protein localises to the cytoplasm. The enzyme catalyses L-glutamate 5-semialdehyde + phosphate + NADP(+) = L-glutamyl 5-phosphate + NADPH + H(+). Its pathway is amino-acid biosynthesis; L-proline biosynthesis; L-glutamate 5-semialdehyde from L-glutamate: step 2/2. Catalyzes the NADPH-dependent reduction of L-glutamate 5-phosphate into L-glutamate 5-semialdehyde and phosphate. The product spontaneously undergoes cyclization to form 1-pyrroline-5-carboxylate. The sequence is that of Gamma-glutamyl phosphate reductase from Psychrobacter sp. (strain PRwf-1).